The primary structure comprises 373 residues: uncharacterized protein (373 aa).

This is an uncharacterized protein from Thermoproteus tenax.